We begin with the raw amino-acid sequence, 1744 residues long: Tensin-1 (1744 aa).

Residues Ser-15–Met-55 form a disordered region. In terms of domain architecture, Phosphatase tensin-type spans Thr-58–Ser-230. Residues Asn-235–Gly-361 form the C2 tensin-type domain. Disordered stretches follow at residues Thr-467–Glu-505, Asp-569–Asp-589, Ala-666–Leu-686, Pro-724–Arg-797, Gly-934–His-956, Arg-982–Ala-1077, and Val-1156–Val-1437. Residues Leu-468 to Thr-481 are compositionally biased toward polar residues. The span at Gly-580 to Asp-589 shows a compositional bias: low complexity. Positions Ala-728–Pro-753 are enriched in polar residues. Over residues Ser-763–Pro-773 the composition is skewed to low complexity. Residues Gln-774–Pro-783 are compositionally biased toward pro residues. 2 stretches are compositionally biased toward basic and acidic residues: residues Thr-1004–Ser-1014 and Arg-1041–Phe-1054. Residues Ala-1060–Gly-1069 show a composition bias toward polar residues. Low complexity-rich tracts occupy residues Val-1156–Val-1169 and Ser-1208–Ser-1220. Polar residues-rich tracts occupy residues Leu-1344–Pro-1355, Gly-1370–Asp-1380, and Glu-1405–Ala-1420. The span at Ser-1421–Ser-1435 shows a compositional bias: low complexity. In terms of domain architecture, SH2 spans Trp-1472–Asp-1581. The PTB domain occupies Ala-1607–Lys-1743.

The protein belongs to the PTEN phosphatase protein family. Binds to actin filaments. Interacts with phosphotyrosine-containing proteins. Post-translationally, tyrosine phosphorylated. As to expression, heart, gizzard, lung and skeletal muscle.

The protein resides in the cell surface. The protein localises to the cell junction. It localises to the focal adhesion. Its subcellular location is the cytoplasm. It is found in the cytoskeleton. May act as a protein phosphatase and/or a lipid phosphatase. Involved in fibrillar adhesion formation. Plays a role in cell polarization and migration. May be involved in cartilage development and in linking signal transduction pathways to the cytoskeleton. This is Tensin-1 (TNS1) from Gallus gallus (Chicken).